Here is a 304-residue protein sequence, read N- to C-terminus: Sulfotransferase 1C3 (304 aa).

A 3'-phosphoadenylyl sulfate-binding site is contributed by 56 to 61 (KSGTTW). 115-117 (KTH) is a binding site for substrate. His117 serves as the catalytic Proton acceptor. Residues Arg139, Ser147, Tyr202, 236–241 (TSFDVM), and 264–268 (FMRKG) each bind 3'-phosphoadenylyl sulfate.

It belongs to the sulfotransferase 1 family. As to expression, not detectable in any of the tissues tested. In terms of tissue distribution, expressed in the small intestine.

It is found in the cytoplasm. The enzyme catalyses an alcohol + 3'-phosphoadenylyl sulfate = an alkyl sulfate + adenosine 3',5'-bisphosphate + H(+). It catalyses the reaction a phenol + 3'-phosphoadenylyl sulfate = an aryl sulfate + adenosine 3',5'-bisphosphate + H(+). The catalysed reaction is lithocholate + 3'-phosphoadenylyl sulfate = lithocholate sulfate + adenosine 3',5'-bisphosphate + H(+). Its function is as follows. Sulfotransferase that utilizes 3'-phospho-5'-adenylyl sulfate (PAPS) as sulfonate donor. Has sulfotransferase activity towards various substrates, such as bile acids, thyroid hormones and toward xenobiotic compounds such as chloro phenols and hydroxypyrenes. Lithocholic acid appears to be the best substrate among the endogenous compounds tested and 3,3',5,5'-tetrachloro-4,4'-biphenyldiol shows the highest specific activity among the xenobiotic compounds. In terms of biological role, exhibits weak sulphating activity and only toward chloro phenols (pentachlorophenol and 3,3',5,5'-tetrachloro-4,4'-biphenyldiol). This Homo sapiens (Human) protein is Sulfotransferase 1C3 (SULT1C3).